Consider the following 500-residue polypeptide: Glycerol kinase (500 aa).

Residue Thr-11 participates in ADP binding. Thr-11, Thr-12, and Ser-13 together coordinate ATP. Thr-11 serves as a coordination point for sn-glycerol 3-phosphate. Residue Arg-15 participates in ADP binding. Residues Arg-81, Glu-82, Tyr-133, and Asp-242 each coordinate sn-glycerol 3-phosphate. The glycerol site is built by Arg-81, Glu-82, Tyr-133, Asp-242, and Gln-243. ADP is bound by residues Thr-264 and Gly-307. The ATP site is built by Thr-264, Gly-307, Gln-311, and Gly-411. Gly-411 is an ADP binding site.

It belongs to the FGGY kinase family.

The enzyme catalyses glycerol + ATP = sn-glycerol 3-phosphate + ADP + H(+). It participates in polyol metabolism; glycerol degradation via glycerol kinase pathway; sn-glycerol 3-phosphate from glycerol: step 1/1. Its activity is regulated as follows. Inhibited by fructose 1,6-bisphosphate (FBP). Functionally, key enzyme in the regulation of glycerol uptake and metabolism. Catalyzes the phosphorylation of glycerol to yield sn-glycerol 3-phosphate. In Bradyrhizobium sp. (strain ORS 278), this protein is Glycerol kinase.